Here is a 636-residue protein sequence, read N- to C-terminus: LDL receptor repeat-containing protein egg-1 (636 aa).

The Cytoplasmic segment spans residues 1 to 130; it reads MSSIAQKNRN…NHSNLFQCPS (130 aa). Residues 131 to 151 traverse the membrane as a helical; Signal-anchor for type II membrane protein segment; it reads VAIVLVLALVILGVLAAIPLT. Residues 152 to 636 lie on the Extracellular side of the membrane; the sequence is LMLTSSAQKM…VLKNSGRFPY (485 aa). A glycan (N-linked (GlcNAc...) asparagine) is linked at N202. 8 LDL-receptor class A domains span residues 205–243, 244–296, 298–335, 336–375, 378–415, 457–499, 503–541, and 542–579; these read TCSG…ENCK, ECQS…AMCK, TCSK…NNCN, KCQK…QQCD, TCSG…ENCP, KCHP…KNCT, ECGI…QNCS, and QCAS…LKCS. Intrachain disulfides connect C213–C233, C227–C242, C245–C273, C251–C286, C280–C295, C299–C312, C306–C325, C319–C334, C337–C365, C359–C374, C379–C392, C387–C405, C399–C414, C458–C476, C466–C489, C483–C498, C504–C518, C514–C531, C525–C540, C543–C556, C550–C569, and C563–C578. The N-linked (GlcNAc...) asparagine glycan is linked to N508. Residue N614 is glycosylated (N-linked (GlcNAc...) asparagine).

It localises to the cell membrane. Probable receptor which is required for the oocyte-to-zygote transition although its exact function is controversial. Seems to be required for fertilization probably by promoting the interaction or fusion between sperm and oocyte. Conversely, shown to be dispensable for fertilization but required for the formation of a continuous and cohesive eggshell chitin layer by maintaining a homogenous distribution of chitin synthase chs-1 at the unfertilized oocyte cell membrane. Appears to recruit or maintain together to the unfertilized oocyte cortex several proteins including chs-1, kinase mbk-2 and pseudophosphatases egg-3, and possibly egg-4 and egg-5. The sequence is that of LDL receptor repeat-containing protein egg-1 from Caenorhabditis briggsae.